Consider the following 136-residue polypeptide: Heme-binding protein Rv0203 (136 aa).

The signal sequence occupies residues 1-27 (MKTGTATTRRRLLAVLIALALPGAAVA). Residues C41 and C115 are joined by a disulfide bond. 3 residues coordinate heme: Y60, H64, and H90.

In terms of assembly, dimer of dimers.

It localises to the secreted. Part of a heme-iron acquisition system. Acts by binding heme and delivering it to the membrane proteins MmpL3 and MmpL11. Can use free heme or heme from host hemoglobin. The protein is Heme-binding protein Rv0203 of Mycobacterium tuberculosis (strain ATCC 25618 / H37Rv).